Reading from the N-terminus, the 344-residue chain is Aromatic amino acid aminotransferase (344 aa).

At K213 the chain carries N6-(pyridoxal phosphate)lysine.

The protein belongs to the class-II pyridoxal-phosphate-dependent aminotransferase family. As to quaternary structure, homodimer. Requires pyridoxal 5'-phosphate as cofactor.

It catalyses the reaction an aromatic L-alpha-amino acid + 2-oxoglutarate = an aromatic oxo-acid + L-glutamate. Aminotransferase that catalyzes the conversion of aromatic amino acids and 2-oxoglutarate into corresponding aromatic oxo acids and L-glutamate. The polypeptide is Aromatic amino acid aminotransferase (Corynebacterium diphtheriae (strain ATCC 700971 / NCTC 13129 / Biotype gravis)).